The primary structure comprises 314 residues: Ferrochelatase (314 aa).

Fe cation-binding residues include H188 and E269.

The protein belongs to the ferrochelatase family.

Its subcellular location is the cytoplasm. The catalysed reaction is heme b + 2 H(+) = protoporphyrin IX + Fe(2+). It functions in the pathway porphyrin-containing compound metabolism; protoheme biosynthesis; protoheme from protoporphyrin-IX: step 1/1. Its function is as follows. Catalyzes the ferrous insertion into protoporphyrin IX. The polypeptide is Ferrochelatase (Campylobacter fetus subsp. fetus (strain 82-40)).